A 49-amino-acid polypeptide reads, in one-letter code: Large ribosomal subunit protein bL33 (49 aa).

It belongs to the bacterial ribosomal protein bL33 family.

This Alkaliphilus metalliredigens (strain QYMF) protein is Large ribosomal subunit protein bL33.